Reading from the N-terminus, the 446-residue chain is Cobalamin biosynthesis protein CbiHC (446 aa).

The cobalt-factor III C(17)-methyltransferase stretch occupies residues 1 to 246 (MLLLPSRGKL…MFTPRGYSNK (246 aa)). Positions 247–446 (YNIGEKRRAE…CLIEHADRPD (200 aa)) are cobalt-precorrin-8 methylmutase.

The protein in the N-terminal section; belongs to the precorrin methyltransferase family. In the C-terminal section; belongs to the CobH family.

The catalysed reaction is Co(II)-factor III + S-adenosyl-L-methionine + H(+) = Co(II)-factor IV + S-adenosyl-L-homocysteine. It carries out the reaction Co-precorrin-8X = cob(II)yrinate. The protein operates within cofactor biosynthesis; adenosylcobalamin biosynthesis; cob(II)yrinate a,c-diamide from sirohydrochlorin (anaerobic route): step 3/10. It participates in cofactor biosynthesis; adenosylcobalamin biosynthesis; cob(II)yrinate a,c-diamide from sirohydrochlorin (anaerobic route): step 9/10. Functionally, bifunctional enzyme with a methyltransferase domain that catalyzes the ring contraction and methylation of C-17 in cobalt-factor III to form cobalt-factor IV, and an isomerase domain that catalyzes the conversion of cobalt-precorrin-8 to cobyrinate. In Archaeoglobus fulgidus (strain ATCC 49558 / DSM 4304 / JCM 9628 / NBRC 100126 / VC-16), this protein is Cobalamin biosynthesis protein CbiHC (cbiHC).